A 440-amino-acid chain; its full sequence is Cysteine proteinase (440 aa).

A signal peptide spans 1 to 60 (MYSSSVVSNPNERLVNNRVENDLESSDDTLSTQAKPVSRLLTRKLLLGVVVLFFLAGVSV). A propeptide spans 61–229 (VSYFLFSKYK…DEDVDLAKLT (169 aa)) (activation peptide). The segment at 166 to 182 (VKGINRFSDLTEREFYK) is involved in processing to yield active enzymes. Residue Asn-206 is glycosylated (N-linked (GlcNAc...) asparagine). Cys-250 and Cys-291 are joined by a disulfide. Catalysis depends on residues Cys-253, His-382, and Asn-404.

Belongs to the peptidase C1 family.

In Theileria parva (East coast fever infection agent), this protein is Cysteine proteinase.